The chain runs to 85 residues: U4-theraphotoxin-Hhn1f (85 aa).

The first 22 residues, 1–22, serve as a signal peptide directing secretion; sequence MKVTLIAILTCAAVLVLHTTAA. Positions 23–48 are excised as a propeptide; it reads EELEAESQLMEVGMPDTELAAVDEER. The cysteines at positions 71 and 82 are disulfide-linked.

This sequence belongs to the neurotoxin 12 (Hwtx-2) family. 02 (Hwtx-2) subfamily. As to expression, expressed by the venom gland.

The protein localises to the secreted. Functionally, postsynaptic neurotoxin. The protein is U4-theraphotoxin-Hhn1f of Cyriopagopus hainanus (Chinese bird spider).